A 512-amino-acid chain; its full sequence is MTINASNIENSFSKINSHFSKLTDYIWPIKRNEISKFLFITLLMFCILFIQNLIRALKDSIVTTMIGAETISFLKFWGVMPSAFLITVMYVKLVNRMKAENIFYLIISIFLIFFALFAYVIFPNHEILHLRPVTVHNLTTSLPNLKWFILLLSKWSFSLFYIIAELWPNVVFALLFWQFVNNITTVEESKRFYPLFGLLSQTGIYLAGHFLENLSKINYYITDKFALQSSFHTLSIQIILTIVLILGIVSIKTFWLLNHKVLDKKHMSLLRFKTKNKSITIAKSFQMILSSRHIRLIATLLICYGIAINLVEGPWKAAATKIYKTPTEYAAFIGSYLSYTGVFTIFFVLLGSNIVRRIGWFTSAVITPSIVFITGILFFAFNNFEGFAGLIIANFILTDPALVAITIGAIQNVLSKSSKYTLFDSTKEMAYVPLEPEIKISGKAAADVIGTKLGKSGSAFLQSLIFIILPSSSYQSISICLMIIFILTCLTWIWATKELNKEYKNSIKFSQK.

Transmembrane regions (helical) follow at residues 34 to 54, 71 to 91, 102 to 122, 157 to 177, 192 to 212, 231 to 251, 296 to 316, 330 to 350, 361 to 381, 390 to 410, 448 to 468, and 476 to 496; these read ISKF…QNLI, ISFL…VMYV, IFYL…YVIF, FSLF…LLFW, FYPL…HFLE, FHTL…IVSI, LIAT…GPWK, AAFI…FVLL, FTSA…FFAF, LIIA…IGAI, VIGT…IFII, and SISI…IWAT.

This sequence belongs to the ADP/ATP translocase tlc family.

Its subcellular location is the cell membrane. Functionally, provides the rickettsial cell with host ATP in exchange for rickettsial ADP. This is an obligate exchange system. This energy acquiring activity is an important component of rickettsial parasitism. The protein is ADP,ATP carrier protein 4 (tlcD) of Rickettsia typhi (strain ATCC VR-144 / Wilmington).